Consider the following 121-residue polypeptide: Large ribosomal subunit protein bL19 (121 aa).

This sequence belongs to the bacterial ribosomal protein bL19 family.

This protein is located at the 30S-50S ribosomal subunit interface and may play a role in the structure and function of the aminoacyl-tRNA binding site. The protein is Large ribosomal subunit protein bL19 of Chlamydia caviae (strain ATCC VR-813 / DSM 19441 / 03DC25 / GPIC) (Chlamydophila caviae).